Consider the following 553-residue polypeptide: Neutral amino acid transporter B(0) (553 aa).

At methionine 1 the chain carries N-acetylmethionine. Topologically, residues 1–50 are cytoplasmic; the sequence is MAVDPPKADPKGVAVDSSRRCPALGSREDQSAKAGGCCGSRDRVRRCIRA. A helical membrane pass occupies residues 51 to 80; the sequence is NLLVLLTVAAVVAGVGLGLGVSAAGGADAL. Topologically, residues 81–93 are extracellular; it reads GPARLTRFAFPGE. The chain crosses the membrane as a helical span at residues 94–115; the sequence is LLLRLLKMIILPLVVCSLIGGA. The Cytoplasmic portion of the chain corresponds to 116-129; sequence ASLDPSALGRVGAW. A helical transmembrane segment spans residues 130 to 152; sequence ALLFFLVTTLLASALGVGLALAL. Residues 153 to 236 are Extracellular-facing; that stretch reads KPGAAVTAIT…INSTMVQLLC (84 aa). Asparagine 165 and asparagine 228 each carry an N-linked (GlcNAc...) asparagine glycan. The chain crosses the membrane as a helical span at residues 237-260; it reads EVEGMNILGLVVFAIVFGVALRKL. The Cytoplasmic segment spans residues 261–269; that stretch reads GPEGELLIR. Residues 270 to 297 form a helical membrane-spanning segment; the sequence is FFNSFNDATMVLVSWIMWYAPVGILFLV. At 298 to 318 the chain is on the extracellular side; sequence ASKIVEMKDVRQLFISLGKYI. The chain crosses the membrane as a helical span at residues 319–340; it reads LCCLLGHAIHGLLVLPLIYFLF. Residues 341-345 lie on the Cytoplasmic side of the membrane; the sequence is TRKNP. An intramembrane region (discontinuously helical) is located at residues 346–376; it reads YRFLWGIMTPLATAFGTSSSSATLPLMMKCV. Topologically, residues 377 to 385 are cytoplasmic; that stretch reads EEKNGVAKH. Residues 386–412 form a helical membrane-spanning segment; it reads ISRFILPIGATVNMDGAALFQCVAAVF. 3 residues coordinate Na(+): glycine 394, threonine 396, and asparagine 398. Topologically, residues 413–425 are extracellular; it reads IAQLNGVSLDFVK. Positions 426 to 459 form an intramembrane region, discontinuously helical; sequence IITILVTATASSVGAAGIPAGGVLTLAIILEAVS. Residues 460–472 lie on the Extracellular side of the membrane; sequence LPVKDISLILAVD. A helical membrane pass occupies residues 473 to 494; it reads WLVDRSCTVLNVEGDAFGAGLL. Positions 483 and 487 each coordinate Na(+). The Cytoplasmic portion of the chain corresponds to 495 to 553; the sequence is QSYVDRTKMPSSEPELIQVKNEVSLNPLPLATEEGNPLLKQYQGPTGDSSATFEKESVM. Serine 505, serine 506, serine 518, serine 543, and serine 551 each carry phosphoserine. The interval 531–553 is disordered; it reads PLLKQYQGPTGDSSATFEKESVM. Polar residues predominate over residues 537–546; that stretch reads QGPTGDSSAT.

This sequence belongs to the dicarboxylate/amino acid:cation symporter (DAACS) (TC 2.A.23) family. SLC1A5 subfamily. As to quaternary structure, homotrimer. As to expression, highly expressed in adipose tissue. Detected in lung, skeletal muscle, large intestine, kidney and testis. Expressed in lung, brain, kidney and neural retina (at protein level). Expressed in Mueller cells (at protein level).

It localises to the cell membrane. Its subcellular location is the melanosome. The catalysed reaction is L-glutamine(out) + L-serine(in) + Na(+)(out) = L-glutamine(in) + L-serine(out) + Na(+)(in). It catalyses the reaction L-glutamine(in) + L-serine(out) + Na(+)(out) = L-glutamine(out) + L-serine(in) + Na(+)(in). It carries out the reaction L-threonine(in) + L-glutamine(out) + Na(+)(out) = L-threonine(out) + L-glutamine(in) + Na(+)(in). The enzyme catalyses L-threonine(out) + L-glutamine(in) + Na(+)(out) = L-threonine(in) + L-glutamine(out) + Na(+)(in). The catalysed reaction is L-asparagine(in) + L-glutamine(out) + Na(+)(out) = L-asparagine(out) + L-glutamine(in) + Na(+)(in). It catalyses the reaction L-asparagine(out) + L-glutamine(in) + Na(+)(out) = L-asparagine(in) + L-glutamine(out) + Na(+)(in). It carries out the reaction L-glutamine(in) + L-alanine(out) + Na(+)(out) = L-glutamine(out) + L-alanine(in) + Na(+)(in). The enzyme catalyses L-valine(out) + L-glutamine(in) + Na(+)(out) = L-valine(in) + L-glutamine(out) + Na(+)(in). The catalysed reaction is L-glutamine(in) + L-methionine(out) + Na(+)(out) = L-glutamine(out) + L-methionine(in) + Na(+)(in). It catalyses the reaction L-glutamine(in) + L-glutamate(out) + Na(+)(out) + H(+)(out) = L-glutamine(out) + L-glutamate(in) + Na(+)(in) + H(+)(in). It carries out the reaction D-serine(in) + L-glutamine(out) + Na(+)(out) = D-serine(out) + L-glutamine(in) + Na(+)(in). The enzyme catalyses D-serine(in) + L-alanine(out) + Na(+)(out) = D-serine(out) + L-alanine(in) + Na(+)(in). The catalysed reaction is nitrate(in) = nitrate(out). It catalyses the reaction iodide(out) = iodide(in). It carries out the reaction thiocyanate(in) = thiocyanate(out). With respect to regulation, down-regulated at acidic pH, with the exception of L-glutamate transport which is up-regulated instead. Functionally, sodium-coupled antiporter of neutral amino acids. In a tri-substrate transport cycle, exchanges neutral amino acids between the extracellular and intracellular compartments, coupled to the inward cotransport of at least one sodium ion. The preferred substrate is the essential amino acid L-glutamine, a precursor for biosynthesis of proteins, nucleotides and amine sugars as well as an alternative fuel for mitochondrial oxidative phosphorylation. Exchanges L-glutamine with other neutral amino acids such as L-serine, L-threonine and L-asparagine in a bidirectional way. Provides L-glutamine to proliferating stem and activated cells driving the metabolic switch toward cell differentiation. The transport cycle is usually pH-independent, with the exception of L-glutamate. Transports extracellular L-glutamate coupled to the cotransport of one proton and one sodium ion in exchange for intracellular L-glutamine counter-ion. May provide for L-glutamate uptake in glial cells regulating glutamine/glutamate cycle in the nervous system. Can transport D-amino acids. Mediates D-serine release from the retinal glia potentially affecting NMDA receptor function in retinal neurons. Displays sodium- and amino acid-dependent but uncoupled channel-like anion conductance with a preference SCN(-) &gt;&gt; NO3(-) &gt; I(-) &gt; Cl(-). Through binding of the fusogenic protein syncytin-1/ERVW-1 may mediate trophoblasts syncytialization, the spontaneous fusion of their plasma membranes, an essential process in placental development. In Mus musculus (Mouse), this protein is Neutral amino acid transporter B(0) (Slc1a5).